A 145-amino-acid chain; its full sequence is 3-hydroxyacyl-[acyl-carrier-protein] dehydratase FabZ (145 aa).

Residue His48 is part of the active site.

It belongs to the thioester dehydratase family. FabZ subfamily.

It localises to the cytoplasm. The catalysed reaction is a (3R)-hydroxyacyl-[ACP] = a (2E)-enoyl-[ACP] + H2O. In terms of biological role, involved in unsaturated fatty acids biosynthesis. Catalyzes the dehydration of short chain beta-hydroxyacyl-ACPs and long chain saturated and unsaturated beta-hydroxyacyl-ACPs. In Geobacillus thermodenitrificans (strain NG80-2), this protein is 3-hydroxyacyl-[acyl-carrier-protein] dehydratase FabZ.